Reading from the N-terminus, the 855-residue chain is Inactive rhomboid protein 1 (855 aa).

The tract at residues 1–36 (MSEARRDSTSSLQRKKPPWLKLDIPSAAPPAAEEPS) is disordered. Over 1–411 (MSEARRDSTS…HRPFFTYWLT (411 aa)) the chain is Cytoplasmic. Residues 25-36 (PSAAPPAAEEPS) show a composition bias toward low complexity. Residues serine 76 and serine 176 each carry the phosphoserine modification. 2 positions are modified to phosphothreonine: threonine 180 and threonine 183. The residue at position 390 (serine 390) is a Phosphoserine. Residues 412 to 432 (FVHSLVTVLAVCIYGIAPVGF) traverse the membrane as a helical segment. The Lumenal portion of the chain corresponds to 433–655 (SQHETVDSVL…NPEVPDQFYR (223 aa)). N-linked (GlcNAc...) asparagine glycosylation occurs at asparagine 583. Residues 656 to 676 (LWLSLFLHAGILHCLVSICFQ) form a helical membrane-spanning segment. Residues 677–691 (MTVLRDLEKLAGWHR) are Cytoplasmic-facing. A helical transmembrane segment spans residues 692–712 (IAIIYLLSGVTGNLASAIFLP). At 713–714 (YR) the chain is on the lumenal side. Residues 715–735 (AEVGPAGSQFGILACLFVELF) traverse the membrane as a helical segment. The Cytoplasmic segment spans residues 736–746 (QSWQILARPWR). Residues 747–767 (AFFKLLAVVLFLFTFGLLPWI) form a helical membrane-spanning segment. Residues 768-772 (DNFAH) lie on the Lumenal side of the membrane. A helical transmembrane segment spans residues 773-793 (ISGFISGLFLSFAFLPYISFG). Topologically, residues 794–803 (KFDLYRKRCQ) are cytoplasmic. The chain crosses the membrane as a helical span at residues 804–824 (IIVFQVVFLGLLAGLVVLFYF). The Lumenal portion of the chain corresponds to 825–855 (YPVRCEWCEFLTCIPFTDKFCEKYELDAQLH).

The protein belongs to the peptidase S54 family. In terms of assembly, homodimer, or homooligomer. Interacts with TGFA and HBEGF. Interacts with EGF; may retain EGF in the endoplasmic reticulum and regulates its degradation through the endoplasmic reticulum-associated degradation (ERAD). Interacts (via cytoplasmic N-terminus) with FRMD8/iTAP; this interaction leads to mutual protein stabilization. Interacts with ADAM17/TACE.

The protein localises to the endoplasmic reticulum membrane. The protein resides in the golgi apparatus membrane. Regulates ADAM17 protease, a sheddase of the epidermal growth factor (EGF) receptor ligands and TNF, thereby plays a role in sleep, cell survival, proliferation, migration and inflammation. Does not exhibit any protease activity on its own. This is Inactive rhomboid protein 1 (RHBDF1) from Plecturocebus moloch (Dusky titi monkey).